A 221-amino-acid polypeptide reads, in one-letter code: N-(5'-phosphoribosyl)anthranilate isomerase (221 aa).

Belongs to the TrpF family.

The enzyme catalyses N-(5-phospho-beta-D-ribosyl)anthranilate = 1-(2-carboxyphenylamino)-1-deoxy-D-ribulose 5-phosphate. The protein operates within amino-acid biosynthesis; L-tryptophan biosynthesis; L-tryptophan from chorismate: step 3/5. This Chlorobaculum parvum (strain DSM 263 / NCIMB 8327) (Chlorobium vibrioforme subsp. thiosulfatophilum) protein is N-(5'-phosphoribosyl)anthranilate isomerase.